The sequence spans 90 residues: Mitochondrial import inner membrane translocase subunit Tim10 (90 aa).

Positions C29–C54 match the Twin CX3C motif motif. Cystine bridges form between C29–C54 and C33–C50.

Belongs to the small Tim family. Heterohexamer; composed of 3 copies of TIMM9 and 3 copies of TIMM10/TIM10A, named soluble 70 kDa complex. The complex forms a 6-bladed alpha-propeller structure and associates with the TIMM22 component of the TIM22 complex. Interacts with multi-pass transmembrane proteins in transit. Also forms a complex composed of TIMM9, TIMM10/TIM10A and FXC1/TIM10B.

Its subcellular location is the mitochondrion inner membrane. In terms of biological role, mitochondrial intermembrane chaperone that participates in the import and insertion of multi-pass transmembrane proteins into the mitochondrial inner membrane. May also be required for the transfer of beta-barrel precursors from the TOM complex to the sorting and assembly machinery (SAM complex) of the outer membrane. Acts as a chaperone-like protein that protects the hydrophobic precursors from aggregation and guide them through the mitochondrial intermembrane space. This chain is Mitochondrial import inner membrane translocase subunit Tim10 (Timm10), found in Rattus norvegicus (Rat).